Reading from the N-terminus, the 700-residue chain is Calpain-2 catalytic subunit (700 aa).

Ala2 carries the post-translational modification N-acetylalanine. The propeptide at 2 to 19 (AGIAAKLAKDREAAEGLG) is anchors to the small subunit. A Calpain catalytic domain is found at 45–344 (LFQDPSFPAL…YSRLEICNLT (300 aa)). 2 residues coordinate Ca(2+): Gly91 and Asp96. The active site involves Cys105. Residues Glu175, Gln229, and Lys230 each coordinate Ca(2+). Active-site residues include His262 and Asn286. Ca(2+)-binding residues include Glu292, Asp299, and Glu323. The segment at 345-514 (PDTLTSDSYK…KKADYQVVDD (170 aa)) is domain III. Residues 515–529 (EIEANIDEIDISEDD) form a linker region. The interval 530–700 (IDDGFRRLFA…LISWLSFSVL (171 aa)) is domain IV. 16 residues coordinate Ca(2+): Ala542, Asp545, Glu547, Glu552, Asp585, Asp587, Ser589, Lys591, Glu596, Asp615, Asp617, Ser619, Thr621, Glu626, Asp658, and Asn661. EF-hand domains are found at residues 572 to 597 (FSIETCKIMVDMLDSDGSGKLGLKEF), 602 to 637 (TKIQKYQKIYREIDVDRSGTMNSYEMRKALEEAGFK), and 652 to 672 (DDDLIIDFDNFVRCLIRLETL).

This sequence belongs to the peptidase C2 family. Forms a heterodimer with a small (regulatory) subunit (CAPNS1). Interacts with CPEB3; this leads to cleavage of CPEB3. The cofactor is Ca(2+). Ubiquitous.

It localises to the cytoplasm. The protein resides in the cell membrane. The enzyme catalyses Broad endopeptidase specificity.. Its activity is regulated as follows. Activated by 200-1000 micromolar concentrations of calcium and inhibited by calpastatin. Functionally, calcium-regulated non-lysosomal thiol-protease which catalyzes limited proteolysis of substrates involved in cytoskeletal remodeling and signal transduction. Proteolytically cleaves MYOC at 'Arg-226'. Proteolytically cleaves CPEB3 following neuronal stimulation which abolishes CPEB3 translational repressor activity, leading to translation of CPEB3 target mRNAs. The chain is Calpain-2 catalytic subunit (CAPN2) from Bos taurus (Bovine).